The primary structure comprises 409 residues: DNA primase small subunit (409 aa).

Active-site residues include Glu46, Asp111, and Asp113. The short motif at 123–133 (CCSGAQVCSKC) is the Zinc knuckle motif element.

The protein belongs to the eukaryotic-type primase small subunit family. DNA polymerase alpha:primase is a four subunit enzyme complex, which is assembled throughout the cell cycle, and consists of the two DNA polymerase subunits A POL1 and B POL12, and the DNA primase large PRI2 and small PRI1 subunits.

Its function is as follows. DNA primase is the polymerase that synthesizes small RNA primers for the Okazaki fragments made during discontinuous DNA replication. In a complex with DNA polymerase alpha (DNA polymerase alpha:primase) constitutes a replicative polymerase. Both primase components participate in formation of the active center, but the ATP-binding site is exclusively located on p48. In Saccharomyces cerevisiae (strain ATCC 204508 / S288c) (Baker's yeast), this protein is DNA primase small subunit (PRI1).